We begin with the raw amino-acid sequence, 296 residues long: Ribosomal RNA small subunit methyltransferase H (296 aa).

Residues 30 to 32 (GGH), D49, F76, D97, and Q104 contribute to the S-adenosyl-L-methionine site.

Belongs to the methyltransferase superfamily. RsmH family.

The protein localises to the cytoplasm. It catalyses the reaction cytidine(1402) in 16S rRNA + S-adenosyl-L-methionine = N(4)-methylcytidine(1402) in 16S rRNA + S-adenosyl-L-homocysteine + H(+). Its function is as follows. Specifically methylates the N4 position of cytidine in position 1402 (C1402) of 16S rRNA. The polypeptide is Ribosomal RNA small subunit methyltransferase H (Mesomycoplasma hyopneumoniae (strain 7448) (Mycoplasma hyopneumoniae)).